The primary structure comprises 74 residues: Large ribosomal subunit protein uL14c (74 aa).

It belongs to the universal ribosomal protein uL14 family. As to quaternary structure, part of the 50S ribosomal subunit.

The protein resides in the plastid. Its subcellular location is the chloroplast. Its function is as follows. Binds to 23S rRNA. This chain is Large ribosomal subunit protein uL14c (rpl14), found in Oenothera ammophila (Evening primerose).